The following is a 300-amino-acid chain: Tyrosine recombinase XerC (300 aa).

A Core-binding (CB) domain is found at methionine 1–valine 86. One can recognise a Tyr recombinase domain in the interval threonine 107 to aspartate 294. Residues arginine 151, lysine 175, histidine 246, arginine 249, and histidine 272 contribute to the active site. Tyrosine 281 serves as the catalytic O-(3'-phospho-DNA)-tyrosine intermediate.

The protein belongs to the 'phage' integrase family. XerC subfamily. Forms a cyclic heterotetrameric complex composed of two molecules of XerC and two molecules of XerD.

Its subcellular location is the cytoplasm. Functionally, site-specific tyrosine recombinase, which acts by catalyzing the cutting and rejoining of the recombining DNA molecules. The XerC-XerD complex is essential to convert dimers of the bacterial chromosome into monomers to permit their segregation at cell division. It also contributes to the segregational stability of plasmids. The chain is Tyrosine recombinase XerC from Mycobacterium sp. (strain JLS).